The chain runs to 119 residues: Large ribosomal subunit protein bL20 (119 aa).

This sequence belongs to the bacterial ribosomal protein bL20 family.

Binds directly to 23S ribosomal RNA and is necessary for the in vitro assembly process of the 50S ribosomal subunit. It is not involved in the protein synthesizing functions of that subunit. This is Large ribosomal subunit protein bL20 from Saccharophagus degradans (strain 2-40 / ATCC 43961 / DSM 17024).